Here is a 204-residue protein sequence, read N- to C-terminus: N-(5'-phosphoribosyl)anthranilate isomerase (204 aa).

Belongs to the TrpF family.

It carries out the reaction N-(5-phospho-beta-D-ribosyl)anthranilate = 1-(2-carboxyphenylamino)-1-deoxy-D-ribulose 5-phosphate. It functions in the pathway amino-acid biosynthesis; L-tryptophan biosynthesis; L-tryptophan from chorismate: step 3/5. The protein is N-(5'-phosphoribosyl)anthranilate isomerase of Pseudomonas fluorescens (strain Pf0-1).